Consider the following 38-residue polypeptide: Trypsin inhibitor DE5 beta chain (38 aa).

It belongs to the protease inhibitor I3 (leguminous Kunitz-type inhibitor) family. Heterodimer of an alpha and a beta chain linked by a disulfide bond.

Functionally, inhibition of trypsin. This chain is Trypsin inhibitor DE5 beta chain, found in Adenanthera pavonina (Sandal bead tree).